Here is a 574-residue protein sequence, read N- to C-terminus: Glutamyl-tRNA(Gln) amidotransferase subunit B, mitochondrial (574 aa).

The protein belongs to the GatB/GatE family. GatB subfamily. As to quaternary structure, subunit of the heterotrimeric GatCAB amidotransferase (AdT) complex, composed of A, B and C subunits.

Its subcellular location is the mitochondrion. The catalysed reaction is L-glutamyl-tRNA(Gln) + L-glutamine + ATP + H2O = L-glutaminyl-tRNA(Gln) + L-glutamate + ADP + phosphate + H(+). Allows the formation of correctly charged Gln-tRNA(Gln) through the transamidation of misacylated Glu-tRNA(Gln) in the mitochondria. The reaction takes place in the presence of glutamine and ATP through an activated gamma-phospho-Glu-tRNA(Gln). The polypeptide is Glutamyl-tRNA(Gln) amidotransferase subunit B, mitochondrial (Phytophthora infestans (strain T30-4) (Potato late blight agent)).